The primary structure comprises 430 residues: Glutamate-1-semialdehyde 2,1-aminomutase (430 aa).

Residue Lys-265 is modified to N6-(pyridoxal phosphate)lysine.

The protein belongs to the class-III pyridoxal-phosphate-dependent aminotransferase family. HemL subfamily. Homodimer. Pyridoxal 5'-phosphate is required as a cofactor.

It is found in the cytoplasm. It catalyses the reaction (S)-4-amino-5-oxopentanoate = 5-aminolevulinate. It functions in the pathway porphyrin-containing compound metabolism; protoporphyrin-IX biosynthesis; 5-aminolevulinate from L-glutamyl-tRNA(Glu): step 2/2. This Shewanella sp. (strain MR-7) protein is Glutamate-1-semialdehyde 2,1-aminomutase.